The following is a 626-amino-acid chain: Phosphomethylpyrimidine synthase (626 aa).

Residues methionine 1–glutamine 22 are disordered. A compositionally biased stretch (polar residues) spans leucine 10–glutamine 22. Substrate contacts are provided by residues asparagine 232, methionine 261, tyrosine 290, histidine 326, serine 346–glycine 348, aspartate 387–arginine 390, and glutamate 426. Histidine 430 is a binding site for Zn(2+). Substrate is bound at residue tyrosine 453. Position 494 (histidine 494) interacts with Zn(2+). 3 residues coordinate [4Fe-4S] cluster: cysteine 574, cysteine 577, and cysteine 582.

It belongs to the ThiC family. In terms of assembly, homodimer. Requires [4Fe-4S] cluster as cofactor.

The catalysed reaction is 5-amino-1-(5-phospho-beta-D-ribosyl)imidazole + S-adenosyl-L-methionine = 4-amino-2-methyl-5-(phosphooxymethyl)pyrimidine + CO + 5'-deoxyadenosine + formate + L-methionine + 3 H(+). Its pathway is cofactor biosynthesis; thiamine diphosphate biosynthesis. In terms of biological role, catalyzes the synthesis of the hydroxymethylpyrimidine phosphate (HMP-P) moiety of thiamine from aminoimidazole ribotide (AIR) in a radical S-adenosyl-L-methionine (SAM)-dependent reaction. The chain is Phosphomethylpyrimidine synthase from Pseudomonas putida (strain GB-1).